The chain runs to 158 residues: Endoribonuclease YbeY (158 aa).

Residues His-119, His-123, and His-129 each coordinate Zn(2+).

This sequence belongs to the endoribonuclease YbeY family. It depends on Zn(2+) as a cofactor.

The protein resides in the cytoplasm. Functionally, single strand-specific metallo-endoribonuclease involved in late-stage 70S ribosome quality control and in maturation of the 3' terminus of the 16S rRNA. This is Endoribonuclease YbeY from Shewanella woodyi (strain ATCC 51908 / MS32).